Reading from the N-terminus, the 1487-residue chain is Chromosome partition protein MukB (1487 aa).

G34 to S41 is a binding site for ATP. 6 coiled-coil regions span residues G297–L458, R506–I601, L637–S666, R781–A806, E836–T1109, and V1210–I1266. The flexible hinge stretch occupies residues P667–R784.

Belongs to the SMC family. MukB subfamily. As to quaternary structure, homodimerization via its hinge domain. Binds to DNA via its C-terminal region. Interacts, and probably forms a ternary complex, with MukE and MukF via its C-terminal region. The complex formation is stimulated by calcium or magnesium. Interacts with tubulin-related protein FtsZ.

The protein resides in the cytoplasm. It localises to the nucleoid. Its function is as follows. Plays a central role in chromosome condensation, segregation and cell cycle progression. Functions as a homodimer, which is essential for chromosome partition. Involved in negative DNA supercoiling in vivo, and by this means organize and compact chromosomes. May achieve or facilitate chromosome segregation by condensation DNA from both sides of a centrally located replisome during cell division. The chain is Chromosome partition protein MukB from Vibrio parahaemolyticus serotype O3:K6 (strain RIMD 2210633).